Consider the following 328-residue polypeptide: Malate dehydrogenase 2 (328 aa).

Gly-12–Ala-18 contributes to the NAD(+) binding site. Substrate contacts are provided by Arg-93 and Arg-99. Residues Asn-106, Gln-113, and Val-130–Asn-132 contribute to the NAD(+) site. Substrate-binding residues include Asn-132 and Arg-163. Catalysis depends on His-188, which acts as the Proton acceptor.

This sequence belongs to the LDH/MDH superfamily. MDH type 2 family.

It catalyses the reaction (S)-malate + NAD(+) = oxaloacetate + NADH + H(+). In terms of biological role, catalyzes the reversible oxidation of malate to oxaloacetate. This chain is Malate dehydrogenase 2, found in Burkholderia vietnamiensis (strain G4 / LMG 22486) (Burkholderia cepacia (strain R1808)).